The following is a 386-amino-acid chain: Methionine aminopeptidase 1 (386 aa).

The residue at position 2 (Ala2) is an N-acetylalanine. The C6H2-type zinc finger occupies 6 to 59 (TRVCETDGCSSEAKLQCPTCIKLGIQGSYFCSQECFKGSWATHKLLHKKAKDEK). The Zn(2+) site is built by Cys9, Cys14, Cys22, Cys25, Cys36, Cys40, His48, and His52. Residue His203 participates in a protein binding. Positions 220, 231, and 294 each coordinate Zn(2+). His301 is a binding site for a protein. Glu327 and Glu358 together coordinate Zn(2+).

This sequence belongs to the peptidase M24A family. Methionine aminopeptidase type 1 subfamily. Associates with the 60S ribosomal subunit of the 80S translational complex. Requires Zn(2+) as cofactor. The cofactor is Co(2+). It depends on Mn(2+) as a cofactor. Fe(2+) is required as a cofactor.

It is found in the cytoplasm. The enzyme catalyses Release of N-terminal amino acids, preferentially methionine, from peptides and arylamides.. Cotranslationally removes the N-terminal methionine from nascent proteins. The N-terminal methionine is often cleaved when the second residue in the primary sequence is small and uncharged (Met-Ala-, Cys, Gly, Pro, Ser, Thr, or Val). This is Methionine aminopeptidase 1 (METAP1) from Pongo abelii (Sumatran orangutan).